Reading from the N-terminus, the 145-residue chain is Putative pre-16S rRNA nuclease (145 aa).

It belongs to the YqgF nuclease family.

It localises to the cytoplasm. In terms of biological role, could be a nuclease involved in processing of the 5'-end of pre-16S rRNA. The chain is Putative pre-16S rRNA nuclease from Limosilactobacillus fermentum (strain NBRC 3956 / LMG 18251) (Lactobacillus fermentum).